The following is a 92-amino-acid chain: Ezrin (92 aa).

The FERM domain maps to Gln-1–Arg-72. Lys-15 carries the N6-acetyllysine modification. Positions Glu-42–Lys-92 are interaction with SCYL3.

In terms of assembly, interacts with PALS1 and NHERF2. Found in a complex with EZR, PODXL and NHERF2. Interacts with MCC, PLEKHG6, PODXL, SCYL3/PACE1, NHERF1 and TMEM8B. Interacts (when phosphorylated) with FES/FPS. Interacts with dimeric S100P, the interaction may be activating through unmasking of F-actin binding sites. Identified in complexes that contain VIM, EZR, AHNAK, BFSP1, BFSP2, ANK2, PLEC, PRX and spectrin. Detected in a complex composed of at least EZR, AHNAK, PPL and PRX. Interacts with PDPN (via cytoplasmic domain); activates RHOA and promotes epithelial-mesenchymal transition. Interacts with SPN/CD43 cytoplasmic tail, CD44 and ICAM2. Interacts with CLIC5; may work together in a complex which also includes RDX and MYO6 to stabilize linkages between the plasma membrane and subjacent actin cytoskeleton at the base of stereocilia. Phosphorylated by tyrosine-protein kinases. Phosphorylation by ROCK2 suppresses the head-to-tail association of the N-terminal and C-terminal halves resulting in an opened conformation which is capable of actin and membrane-binding. Post-translationally, S-nitrosylation is induced by interferon-gamma and oxidatively-modified low-densitity lipoprotein (LDL(ox)) possibly implicating the iNOS-S100A8/9 transnitrosylase complex.

The protein localises to the apical cell membrane. The protein resides in the cell projection. Its subcellular location is the microvillus membrane. It localises to the ruffle membrane. It is found in the cytoplasm. The protein localises to the cell cortex. The protein resides in the cytoskeleton. Its subcellular location is the microvillus. A head-to-tail association, of the N-terminal and C-terminal halves results in a closed conformation (inactive form) which is incapable of actin or membrane-binding. Functionally, probably involved in connections of major cytoskeletal structures to the plasma membrane. In epithelial cells, required for the formation of microvilli and membrane ruffles on the apical pole. Along with PLEKHG6, required for normal macropinocytosis. This chain is Ezrin, found in Mesocricetus auratus (Golden hamster).